The sequence spans 346 residues: Free fatty acid receptor 3 (346 aa).

The Extracellular segment spans residues 1–19 (MDTGPDQSYFSGNHWFVFS). A helical transmembrane segment spans residues 20–40 (VYLLTFLVGLPLNLLALVVFV). The Cytoplasmic portion of the chain corresponds to 41–47 (GKLQRRP). Residues 48–68 (VAVDVLLLNLTASDLLLLLFL) form a helical membrane-spanning segment. Residues 69-88 (PFRMVEAANGMHWPLPFILC) lie on the Extracellular side of the membrane. Cysteines 88 and 169 form a disulfide. The helical transmembrane segment at 89–111 (PLSGFIFFTTIYLTALFLAAVSI) threads the bilayer. Over 112-132 (ERFLSVAHPLWYKTRPRLGQA) the chain is Cytoplasmic. A helical membrane pass occupies residues 133-153 (GLVSVACWLLASAHCSVVYVI). At 154–178 (EFSGDISHSQGTNGTCYLEFRKDQL) the chain is on the extracellular side. A glycan (N-linked (GlcNAc...) asparagine) is linked at N166. Residues 179-199 (AILLPVRLEMAVVLFVVPLII) form a helical membrane-spanning segment. At 200 to 222 (TSYCYSRLVWILGRGGSHRRQRR) the chain is on the cytoplasmic side. The helical transmembrane segment at 223 to 243 (VAGLLAATLLNFLVCFGPYNV) threads the bilayer. The Extracellular segment spans residues 244–258 (SHVVGYICGESPAWR). The chain crosses the membrane as a helical span at residues 259–279 (IYVTLLSTLNSCVDPFVYYFS). Topologically, residues 280–346 (SSGFQADFHE…TGGQVACAES (67 aa)) are cytoplasmic. Over residues 307–330 (MELKEQKGGEEQRADRPAERKTSE) the composition is skewed to basic and acidic residues. Residues 307-346 (MELKEQKGGEEQRADRPAERKTSEHSQGCGTGGQVACAES) form a disordered region.

This sequence belongs to the G-protein coupled receptor 1 family. As to expression, highest level in adipose tissue, and lower expression across all tissues tested. Expressed in sympathetic ganglia.

The protein localises to the cell membrane. G protein-coupled receptor that is activated by a major product of dietary fiber digestion, the short chain fatty acids (SCFAs), and that plays a role in the regulation of whole-body energy homeostasis and in intestinal immunity. In omnivorous mammals, the short chain fatty acids acetate, propionate and butyrate are produced primarily by the gut microbiome that metabolizes dietary fibers. SCFAs serve as a source of energy but also act as signaling molecules. That G protein-coupled receptor is probably coupled to the pertussis toxin-sensitive, G(i/o)-alpha family of G proteins. Its activation results in the formation of inositol 1,4,5-trisphosphate, the mobilization of intracellular calcium, the phosphorylation of the MAPK3/ERK1 and MAPK1/ERK2 kinases and the inhibition of intracellular cAMP accumulation. Activated by SCFAs and by beta-hydroxybutyrate, a ketone body produced by the liver upon starvation, it inhibits N-type calcium channels and modulates the activity of sympathetic neurons through a signaling cascade involving the beta and gamma subunits of its coupled G protein, phospholipase C and MAP kinases. Thereby, it may regulate energy expenditure through the control of the sympathetic nervous system that controls for instance heart rate. Upon activation by SCFAs accumulating in the intestine, it may also signal to the brain via neural circuits which in turn would regulate intestinal gluconeogenesis. May also control the production of hormones involved in whole-body energy homeostasis. May for instance, regulate blood pressure through renin secretion. May also regulate secretion of the PYY peptide by enteroendocrine cells and control gut motility, intestinal transit rate, and the harvesting of energy from SCFAs produced by gut microbiota. May also indirectly regulate the production of LEP/Leptin, a hormone acting on the CNS to inhibit food intake, in response to the presence of short-chain fatty acids in the intestine. Finally, may also play a role in glucose homeostasis. Besides its role in energy homeostasis, may play a role in intestinal immunity. May mediate the activation of the inflammatory and immune response by SCFAs in the gut, regulating the rapid production of chemokines and cytokines by intestinal epithelial cells. Among SCFAs, the fatty acids containing less than 6 carbons, the most potent activators are probably propionate, butyrate and pentanoate while acetate is a poor activator. In Homo sapiens (Human), this protein is Free fatty acid receptor 3 (FFAR3).